A 174-amino-acid chain; its full sequence is Crossover junction endodeoxyribonuclease RuvC (174 aa).

Residues D16, E76, and D148 contribute to the active site. 3 residues coordinate Mg(2+): D16, E76, and D148.

This sequence belongs to the RuvC family. As to quaternary structure, homodimer which binds Holliday junction (HJ) DNA. The HJ becomes 2-fold symmetrical on binding to RuvC with unstacked arms; it has a different conformation from HJ DNA in complex with RuvA. In the full resolvosome a probable DNA-RuvA(4)-RuvB(12)-RuvC(2) complex forms which resolves the HJ. The cofactor is Mg(2+).

It is found in the cytoplasm. The enzyme catalyses Endonucleolytic cleavage at a junction such as a reciprocal single-stranded crossover between two homologous DNA duplexes (Holliday junction).. The RuvA-RuvB-RuvC complex processes Holliday junction (HJ) DNA during genetic recombination and DNA repair. Endonuclease that resolves HJ intermediates. Cleaves cruciform DNA by making single-stranded nicks across the HJ at symmetrical positions within the homologous arms, yielding a 5'-phosphate and a 3'-hydroxyl group; requires a central core of homology in the junction. The consensus cleavage sequence is 5'-(A/T)TT(C/G)-3'. Cleavage occurs on the 3'-side of the TT dinucleotide at the point of strand exchange. HJ branch migration catalyzed by RuvA-RuvB allows RuvC to scan DNA until it finds its consensus sequence, where it cleaves and resolves the cruciform DNA. This is Crossover junction endodeoxyribonuclease RuvC from Rhodopseudomonas palustris (strain ATCC BAA-98 / CGA009).